Reading from the N-terminus, the 760-residue chain is MKIQQLIVFLFAVVLIDARTPKRYSELDIVMSTCTTFIGKYGTVCTSTGKRSTNWNCYCKTDAGFGTISDCLVRGFNNNTNIISKFTESCNMTESKFHAKYDKIQAEFKTNGTEYAKMTTKSSSGSKTSASASKSSKSTGSSNASKSSTNAHGSNSSTSSTSSSSSKSGKGNSGTSTTETITTPLLIDYKKFTPYKDAYQMSNNNFNLSINYGSGLLGYWAGILAIAIFANMIKKMFPSLTNYLSGSISNLFRKHLFLPATFRKKKAQEFSIGVYGFFDGLIPTRLETIIVVIFVVLTGLFSALHIHHVKDNPQYATKNAELGHLIADRTGILGTFLIPLLILFGGRNNFLQWLTGWDFATFIMYHRWISRVDVLLIIVHAITFSVSDKATGKYNTRMKRDFMIWGTVSTICGGFILFQAMLFFRRKCYEVFFLIHIVLVVFFVVGGYYHLESQGYGDFMWAAIAVWAFDRVVRLGRIFFFGARKATVSIKGDDTLKIEVPKPKYWKSVAGGHAFIHFLKPTLFLQSHPFTFTTTESNDKIVLYAKIKNGITSNIAKYLSPLPGNTATIRVLVEGPYGEPSSAGRNCKNVVFVAGGNGIPGIYSECVDLAKKSKNQSIKLIWIIRHWKSLSWFTEELEYLKKTNVQSTIYVTQPQDCSGLECFEHDVSFEKKSDEKDSVESSQYSLISNIKQGLSHVEFIEGRPDISTQVEQEVKQADGAIGFVTCGHPAMVDELRFAVTQNLNVSKHRVEYHEQLQTWA.

An N-terminal signal peptide occupies residues 1 to 18 (MKIQQLIVFLFAVVLIDA). At 19 to 212 (RTPKRYSELD…NNNFNLSINY (194 aa)) the chain is on the extracellular side. Residues Asn78, Asn91, Asn111, Asn143, Asn155, and Asn207 are each glycosylated (N-linked (GlcNAc...) asparagine). The interval 119-177 (TTKSSSGSKTSASASKSSKSTGSSNASKSSTNAHGSNSSTSSTSSSSSKSGKGNSGTST) is disordered. The chain crosses the membrane as a helical span at residues 213-233 (GSGLLGYWAGILAIAIFANMI). The Cytoplasmic portion of the chain corresponds to 234–288 (KKMFPSLTNYLSGSISNLFRKHLFLPATFRKKKAQEFSIGVYGFFDGLIPTRLET). Residues 289–309 (IIVVIFVVLTGLFSALHIHHV) traverse the membrane as a helical segment. At 310-324 (KDNPQYATKNAELGH) the chain is on the extracellular side. Residues 325–345 (LIADRTGILGTFLIPLLILFG) form a helical membrane-spanning segment. Residues 330–445 (TGILGTFLIP…HIVLVVFFVV (116 aa)) enclose the Ferric oxidoreductase domain. Residues 346 to 371 (GRNNFLQWLTGWDFATFIMYHRWISR) are Cytoplasmic-facing. Positions 366 and 380 each coordinate heme. A helical transmembrane segment spans residues 372–392 (VDVLLIIVHAITFSVSDKATG). The Extracellular portion of the chain corresponds to 393–403 (KYNTRMKRDFM). The chain crosses the membrane as a helical span at residues 404 to 424 (IWGTVSTICGGFILFQAMLFF). The Cytoplasmic segment spans residues 425-430 (RRKCYE). Residues 431–451 (VFFLIHIVLVVFFVVGGYYHL) form a helical membrane-spanning segment. Positions 436 and 450 each coordinate heme. The Extracellular segment spans residues 452 to 760 (ESQGYGDFMW…EYHEQLQTWA (309 aa)). The region spanning 465–583 (AVWAFDRVVR…EGPYGEPSSA (119 aa)) is the FAD-binding FR-type domain. 575-578 (GPYG) contributes to the NADP(+) binding site. An N-linked (GlcNAc...) asparagine glycan is attached at Asn615. An NADP(+)-binding site is contributed by 726–727 (CG). An N-linked (GlcNAc...) asparagine glycan is attached at Asn744.

It belongs to the ferric reductase (FRE) family. Requires FAD as cofactor. It depends on heme as a cofactor.

The protein resides in the cell membrane. It catalyses the reaction 2 a Fe(II)-siderophore + NADP(+) + H(+) = 2 a Fe(III)-siderophore + NADPH. Ferric reductase responsible for reducing extracellular iron and copper prior to import. Catalyzes the reductive uptake of Fe(3+)-salts and Fe(3+) bound to catecholate or hydroxamate siderophores. Fe(3+) is reduced to Fe(2+), which then dissociates from the siderophore and can be imported by the high-affinity Fe(2+) transport complex in the plasma membrane. Also participates in Cu(2+) reduction and Cu(+) uptake. Involved in maintenance of cell wall integrity (CWI), mitochondrial function, and interaction between the pathogen and the host. In Candida albicans (strain SC5314 / ATCC MYA-2876) (Yeast), this protein is Ferric/cupric reductase transmembrane component 1.